The primary structure comprises 364 residues: UDP-N-acetylglucosamine--N-acetylmuramyl-(pentapeptide) pyrophosphoryl-undecaprenol N-acetylglucosamine transferase (364 aa).

UDP-N-acetyl-alpha-D-glucosamine-binding positions include 10–12, N124, R165, S193, I248, and Q293; that span reads TGG.

It belongs to the glycosyltransferase 28 family. MurG subfamily.

It is found in the cell inner membrane. It carries out the reaction di-trans,octa-cis-undecaprenyl diphospho-N-acetyl-alpha-D-muramoyl-L-alanyl-D-glutamyl-meso-2,6-diaminopimeloyl-D-alanyl-D-alanine + UDP-N-acetyl-alpha-D-glucosamine = di-trans,octa-cis-undecaprenyl diphospho-[N-acetyl-alpha-D-glucosaminyl-(1-&gt;4)]-N-acetyl-alpha-D-muramoyl-L-alanyl-D-glutamyl-meso-2,6-diaminopimeloyl-D-alanyl-D-alanine + UDP + H(+). The protein operates within cell wall biogenesis; peptidoglycan biosynthesis. Functionally, cell wall formation. Catalyzes the transfer of a GlcNAc subunit on undecaprenyl-pyrophosphoryl-MurNAc-pentapeptide (lipid intermediate I) to form undecaprenyl-pyrophosphoryl-MurNAc-(pentapeptide)GlcNAc (lipid intermediate II). The chain is UDP-N-acetylglucosamine--N-acetylmuramyl-(pentapeptide) pyrophosphoryl-undecaprenol N-acetylglucosamine transferase from Geobacter metallireducens (strain ATCC 53774 / DSM 7210 / GS-15).